Reading from the N-terminus, the 590-residue chain is Glutamine--tRNA ligase (590 aa).

Positions 55–65 (PEPNGYLHIGH) match the 'HIGH' region motif. ATP contacts are provided by residues 56–58 (EPN) and 62–68 (HIGHAKS). The L-glutamine site is built by Asp-93 and Tyr-238. Residues Thr-257 and 292-293 (RL) contribute to the ATP site. Residues 299–303 (ITSKR) carry the 'KMSKS' region motif.

Belongs to the class-I aminoacyl-tRNA synthetase family. Monomer.

The protein localises to the cytoplasm. The enzyme catalyses tRNA(Gln) + L-glutamine + ATP = L-glutaminyl-tRNA(Gln) + AMP + diphosphate. The protein is Glutamine--tRNA ligase of Polynucleobacter asymbioticus (strain DSM 18221 / CIP 109841 / QLW-P1DMWA-1) (Polynucleobacter necessarius subsp. asymbioticus).